Consider the following 480-residue polypeptide: 3-isopropylmalate dehydratase large subunit (480 aa).

The [4Fe-4S] cluster site is built by Cys357, Cys417, and Cys420. The segment covering 431–441 has biased composition (polar residues); it reads GQRCASTSNRN. The disordered stretch occupies residues 431–454; it reads GQRCASTSNRNFEGRQGKGGRTHL.

It belongs to the aconitase/IPM isomerase family. LeuC type 1 subfamily. As to quaternary structure, heterodimer of LeuC and LeuD. The cofactor is [4Fe-4S] cluster.

The catalysed reaction is (2R,3S)-3-isopropylmalate = (2S)-2-isopropylmalate. It participates in amino-acid biosynthesis; L-leucine biosynthesis; L-leucine from 3-methyl-2-oxobutanoate: step 2/4. In terms of biological role, catalyzes the isomerization between 2-isopropylmalate and 3-isopropylmalate, via the formation of 2-isopropylmaleate. This Mycobacteroides abscessus (strain ATCC 19977 / DSM 44196 / CCUG 20993 / CIP 104536 / JCM 13569 / NCTC 13031 / TMC 1543 / L948) (Mycobacterium abscessus) protein is 3-isopropylmalate dehydratase large subunit.